The chain runs to 147 residues: MKSLKKQRRIQIIALATVALVGSTALIGYAMRDGINYFRSPSQVMETPPEPTETFRIGGLVEEGTLQRGQGEAVRFSVTDGGASVPVTYVGVLPDLFEENQGMVGTGRYVNGVFEASEILAKHDETYMPKEVVDALKEQGVYREGDS.

The Cytoplasmic segment spans residues 1-9 (MKSLKKQRR). The helical; Signal-anchor for type II membrane protein transmembrane segment at 10 to 30 (IQIIALATVALVGSTALIGYA) threads the bilayer. Topologically, residues 31-147 (MRDGINYFRS…EQGVYREGDS (117 aa)) are periplasmic. Residues histidine 123 and tyrosine 127 each contribute to the heme site.

Belongs to the CcmE/CycJ family.

The protein resides in the cell inner membrane. In terms of biological role, heme chaperone required for the biogenesis of c-type cytochromes. Transiently binds heme delivered by CcmC and transfers the heme to apo-cytochromes in a process facilitated by CcmF and CcmH. The protein is Cytochrome c-type biogenesis protein CcmE of Ruegeria sp. (strain TM1040) (Silicibacter sp.).